The chain runs to 245 residues: Dehydrogenase/reductase SDR family member 6 (245 aa).

NAD(+) is bound by residues 16–18 (QGI), Asp-37, and Asp-58. Arg-144 provides a ligand contact to substrate. Tyr-147 (proton acceptor) is an active-site residue. NAD(+) is bound by residues Lys-151 and 180–184 (VDTPS). Substrate contacts are provided by Arg-188 and Arg-205.

It belongs to the short-chain dehydrogenases/reductases (SDR) family. Homotetramer.

It localises to the cytoplasm. The catalysed reaction is cis-4-hydroxy-L-proline + NAD(+) = 4-oxo-L-proline + NADH + H(+). The enzyme catalyses (R)-3-hydroxybutanoate + NAD(+) = acetoacetate + NADH + H(+). The protein operates within amino-acid metabolism. Its pathway is siderophore biosynthesis. Functionally, NAD(H)-dependent dehydrogenase/reductase with a preference for cyclic substrates. Catalyzes stereoselective conversion of 4-oxo-L-proline to cis-4-hydroxy-L-proline, likely a detoxification mechanism for ketoprolines. Mediates the formation of 2,5-dihydroxybenzoate (2,5-DHBA), a siderophore that chelates free cytoplasmic iron and associates with LCN2, thereby regulating iron transport and homeostasis while protecting cells against free radical-induced oxidative stress. The iron-siderophore complex is imported into mitochondria, providing an iron source for mitochondrial metabolic processes in particular heme synthesis. May act as a 3-hydroxybutyrate dehydrogenase. This chain is Dehydrogenase/reductase SDR family member 6 (BDH2), found in Bos taurus (Bovine).